We begin with the raw amino-acid sequence, 200 residues long: Putative protein ATXN8OS (200 aa).

The interval 19–39 is disordered; sequence PFSGLKEEEEEDGEDDEEEEE. Residues 25–39 show a composition bias toward acidic residues; that stretch reads EEEEEDGEDDEEEEE.

Expressed in brain. Expressed in muscle tissues (at protein level).

The protein localises to the cytoplasm. This Homo sapiens (Human) protein is Putative protein ATXN8OS.